Reading from the N-terminus, the 1048-residue chain is MYLAAVSAGRRRPGGDGGGGGGGWHLAAAGWLLLLALLLGQPGTRALVCLPCDESKCEEPKSCPGIIVLGICGCCFMCARQRNESCGGVYGLHGACDRGLRCVIRPPLNGDSITEYEVGVCEDENWDDDQLLGFEPCNENLITGCNIINGKCDCDTIRTCNNPFEFPSRDTCLSALKRIEEEKPDCSKARCEVQFSPRCPEDSILIEGYAPPGECCPLPSRCVCNPAGCLRKVCQPGYLNILVSKASGKPGECCDLYECKPVFSVDCSTVECPPVQQVVCPLDSYETQVRLTADGCCTLPTRCECLSGLCGFPMCEAGSVPQIVSRGDGTPGKCCDVFECVNEVKPTCIFNSMEYYDGDMFRMDACRFCRCQGGVSICFSAQCGELHCDRYYVPEGECCPVCEDPVYPVNNPAGCYANGQIQAHGDRWREDDCTFCQCINGNPHCVATACGQSCLNPVKVPGECCPVCEEPTYITIGPPTCELLVNCTLTEKDCIYSFKLDQNGCRICQCKTREELCTGLISGCSLDCSFGFQTDAHNCEICQCRPRPKKCKPIVCDKYCPFGYLKNKHGCEICRCKKCPEMPCGKICPMGFQQNSHGCVICKCREATASLMPPVKTGSCLSMDGRRHENEESWHDGCRECYCHNGREMCALITCPVPNCGNPTIHPGQCCPSCPDEIIVQKPELTSPSICHAPGGEYFVEGETWNIDSCTQCTCHSGRVLCETEVCPPLLCQNPTRTQDSCCPQCPDEPLQPSLSSNVSMPSYCKNDEGDIFLTAESWKPNVCTSCICMDGVIRCYSESCPPVSCERPVLRKGQCCPYCIEDTVPKKVVCHFNGKTYADEERWDIDSCTHCYCLQGQTLCSTVSCPPLPCAEPINVEGSCCPMCPEMYVPEPTNIPIEKTNHRGDVELEVPNWSTPSENDIIHIHRDMNHLQGEYRSGNGPHPSEDASVSSVALVTVPITIALLVIIVFLLINQKKQWIPVSCYKAPTKPSCLNNQLVYVDCKKGTMVQVDSSQRMLRIADPDSRYSGFYSMQKQNNLQADNFYQTV.

Positions 1–46 are cleaved as a signal peptide; it reads MYLAAVSAGRRRPGGDGGGGGGGWHLAAAGWLLLLALLLGQPGTRA. One can recognise an IGFBP N-terminal domain in the interval 47 to 124; it reads LVCLPCDESK…EYEVGVCEDE (78 aa). Residues 47–952 lie on the Extracellular side of the membrane; sequence LVCLPCDESK…HPSEDASVSS (906 aa). 4 disulfides stabilise this stretch: Cys-49–Cys-72, Cys-52–Cys-74, Cys-57–Cys-75, and Cys-63–Cys-78. An N-linked (GlcNAc...) asparagine glycan is attached at Asn-83. 2 disulfides stabilise this stretch: Cys-86–Cys-102 and Cys-96–Cys-121. Residues 326 to 328 carry the Cell attachment site motif; that stretch reads RGD. 2 VWFC domains span residues 346-403 and 413-469; these read PTCI…PVCE and AGCY…PVCE. Antistasin-like domains follow at residues 481–510, 517–544, 551–576, and 579–604; these read CELL…ICQC, CTGL…ICQC, CKPI…ICRC, and CPEM…ICKC. A glycan (N-linked (GlcNAc...) asparagine) is linked at Asn-486. 2 VWFC domains span residues 618 to 675 and 689 to 747; these read GSCL…PSCP and SICH…PQCP. A glycan (N-linked (GlcNAc...) asparagine) is linked at Asn-758. VWFC domains follow at residues 763-821 and 829-886; these read SYCK…PYCI and VVCH…PMCP. The short motif at 904 to 906 is the Cell attachment site element; it reads RGD. Asn-913 is a glycosylation site (N-linked (GlcNAc...) asparagine). The chain crosses the membrane as a helical span at residues 953-973; sequence VALVTVPITIALLVIIVFLLI. At 974 to 1048 the chain is on the cytoplasmic side; that stretch reads NQKKQWIPVS…LQADNFYQTV (75 aa).

Its subcellular location is the membrane. In terms of biological role, may play a role in CNS development by interacting with growth factors implicated in motor neuron differentiation and survival. The sequence is that of Cysteine-rich motor neuron 1 protein (CRIM1) from Gallus gallus (Chicken).